The primary structure comprises 143 residues: Large ribosomal subunit protein uL13 (143 aa).

It belongs to the universal ribosomal protein uL13 family. Part of the 50S ribosomal subunit.

This protein is one of the early assembly proteins of the 50S ribosomal subunit, although it is not seen to bind rRNA by itself. It is important during the early stages of 50S assembly. This Rubrobacter xylanophilus (strain DSM 9941 / JCM 11954 / NBRC 16129 / PRD-1) protein is Large ribosomal subunit protein uL13.